Reading from the N-terminus, the 392-residue chain is Phosphoglycerate kinase (392 aa).

Substrate contacts are provided by residues D21–N23, R36, H59–R62, R113, and R146. ATP contacts are provided by residues K197, E314, and G340–T343.

It belongs to the phosphoglycerate kinase family. In terms of assembly, monomer.

The protein resides in the cytoplasm. The catalysed reaction is (2R)-3-phosphoglycerate + ATP = (2R)-3-phospho-glyceroyl phosphate + ADP. It participates in carbohydrate degradation; glycolysis; pyruvate from D-glyceraldehyde 3-phosphate: step 2/5. This Vesicomyosocius okutanii subsp. Calyptogena okutanii (strain HA) protein is Phosphoglycerate kinase.